The following is a 417-amino-acid chain: MNILYYDCFSGISGDMNLAAMIDLGVSPDFLITELAKLGMEDEFSLKISQDSRKGIFGTRVDVELAHQHEHHHDHGHHHHGHGHHHDHTHDHHHHHEHRNLKDIEELINSSDLNDKVKATSLAIFKRVAKAEAKIHGSTIYEVHFHEVGATDSIVDIVGAAICFHELEIDQVWCSSIELGGGFVNCAHGKMPVPAPATSEILAGLPTTQGAVQQETTTPTGAAILAEFINNFSDSPRMTVLKTAYGIGHRDNEIPNVLRVQLANIEQQVSSLPTVPSRLLQCNIDDMTGEMLGAALDQLMEDGAMDVHFTSIVMKKNRPATTLSLLCSAEDEDKFKRLIFKHTSTLGIKSIAIEKTVLDISFDKLETPLGTVTMKNAILDGEVIRSKPELEDCRALAKQHGIPLSEVYLQIGKVREI.

Residues 69 to 99 (HEHHHDHGHHHHGHGHHHDHTHDHHHHHEHR) form a disordered region. Residues 74–99 (DHGHHHHGHGHHHDHTHDHHHHHEHR) are compositionally biased toward basic residues.

Belongs to the LarC family.

This is Putative nickel insertion protein from Maridesulfovibrio salexigens (strain ATCC 14822 / DSM 2638 / NCIMB 8403 / VKM B-1763) (Desulfovibrio salexigens).